We begin with the raw amino-acid sequence, 417 residues long: Lipoyl synthase, mitochondrial (417 aa).

Residues 1–26 (MAVCARGLRCLGTPAVSLRLAASRSY) constitute a mitochondrion transit peptide. The interval 27-61 (ATTTPPDPAIPNTPGAAATSSPAKRPRTSFQDKLN) is disordered. Residues 44-58 (ATSSPAKRPRTSFQD) show a composition bias toward polar residues. [4Fe-4S] cluster contacts are provided by Cys-134, Cys-139, Cys-145, Cys-165, Cys-169, Cys-172, and Ser-380. Residues 148–369 (GGSKSAATAT…KEKALEMGFL (222 aa)) form the Radical SAM core domain. The segment at 398–417 (ESTGPGSASVQDVATGDLVR) is disordered.

This sequence belongs to the radical SAM superfamily. Lipoyl synthase family. [4Fe-4S] cluster serves as cofactor.

It is found in the mitochondrion. The enzyme catalyses [[Fe-S] cluster scaffold protein carrying a second [4Fe-4S](2+) cluster] + N(6)-octanoyl-L-lysyl-[protein] + 2 oxidized [2Fe-2S]-[ferredoxin] + 2 S-adenosyl-L-methionine + 4 H(+) = [[Fe-S] cluster scaffold protein] + N(6)-[(R)-dihydrolipoyl]-L-lysyl-[protein] + 4 Fe(3+) + 2 hydrogen sulfide + 2 5'-deoxyadenosine + 2 L-methionine + 2 reduced [2Fe-2S]-[ferredoxin]. The protein operates within protein modification; protein lipoylation via endogenous pathway; protein N(6)-(lipoyl)lysine from octanoyl-[acyl-carrier-protein]: step 2/2. Functionally, catalyzes the radical-mediated insertion of two sulfur atoms into the C-6 and C-8 positions of the octanoyl moiety bound to the lipoyl domains of lipoate-dependent enzymes, thereby converting the octanoylated domains into lipoylated derivatives. The chain is Lipoyl synthase, mitochondrial from Uncinocarpus reesii (strain UAMH 1704).